A 361-amino-acid chain; its full sequence is Nicotinate-nucleotide--dimethylbenzimidazole phosphoribosyltransferase (361 aa).

Glutamate 320 (proton acceptor) is an active-site residue.

It belongs to the CobT family. Homodimer.

The catalysed reaction is 5,6-dimethylbenzimidazole + nicotinate beta-D-ribonucleotide = alpha-ribazole 5'-phosphate + nicotinate + H(+). It participates in nucleoside biosynthesis; alpha-ribazole biosynthesis; alpha-ribazole from 5,6-dimethylbenzimidazole: step 1/2. Functionally, catalyzes the synthesis of alpha-ribazole-5'-phosphate from nicotinate mononucleotide (NAMN) and 5,6-dimethylbenzimidazole (DMB). The chain is Nicotinate-nucleotide--dimethylbenzimidazole phosphoribosyltransferase from Shigella boydii serotype 18 (strain CDC 3083-94 / BS512).